The sequence spans 456 residues: tRNA modification GTPase MnmE (456 aa).

Positions 23, 85, and 124 each coordinate (6S)-5-formyl-5,6,7,8-tetrahydrofolate. The 156-residue stretch at 220–375 folds into the TrmE-type G domain; the sequence is GLRVLIFGKP…LVSAIQERFV (156 aa). Asn230 serves as a coordination point for K(+). Residues 230-235, 249-255, and 274-277 each bind GTP; these read NVGKSS, TDIPGTT, and DTAG. A Mg(2+)-binding site is contributed by Ser234. Residues Thr249, Ile251, and Thr254 each contribute to the K(+) site. Thr255 provides a ligand contact to Mg(2+). Lys456 provides a ligand contact to (6S)-5-formyl-5,6,7,8-tetrahydrofolate.

This sequence belongs to the TRAFAC class TrmE-Era-EngA-EngB-Septin-like GTPase superfamily. TrmE GTPase family. As to quaternary structure, homodimer. Heterotetramer of two MnmE and two MnmG subunits. The cofactor is K(+).

The protein localises to the cytoplasm. Its function is as follows. Exhibits a very high intrinsic GTPase hydrolysis rate. Involved in the addition of a carboxymethylaminomethyl (cmnm) group at the wobble position (U34) of certain tRNAs, forming tRNA-cmnm(5)s(2)U34. In Syntrophotalea carbinolica (strain DSM 2380 / NBRC 103641 / GraBd1) (Pelobacter carbinolicus), this protein is tRNA modification GTPase MnmE.